A 139-amino-acid chain; its full sequence is S-adenosyl-L-methionine-binding protein AF_0241 (139 aa).

In terms of domain architecture, TsaA-like spans 3 to 133; that stretch reads LKPIGVVKSP…YSPEIDCVNQ (131 aa). S-adenosyl-L-methionine is bound by residues Q16, 20 to 22, 58 to 59, R82, L92, and 113 to 116; these read PRQ, DK, and LDGS.

This sequence belongs to the tRNA methyltransferase O family. As to quaternary structure, homodimer.

The chain is S-adenosyl-L-methionine-binding protein AF_0241 from Archaeoglobus fulgidus (strain ATCC 49558 / DSM 4304 / JCM 9628 / NBRC 100126 / VC-16).